The chain runs to 44 residues: Large ribosomal subunit protein bL34 (44 aa).

This sequence belongs to the bacterial ribosomal protein bL34 family.

The polypeptide is Large ribosomal subunit protein bL34 (Wolbachia pipientis wMel).